A 159-amino-acid chain; its full sequence is Ribosomal RNA large subunit methyltransferase H (159 aa).

Residues L76, G108, and 127 to 132 (FGLLTL) contribute to the S-adenosyl-L-methionine site.

It belongs to the RNA methyltransferase RlmH family. In terms of assembly, homodimer.

The protein localises to the cytoplasm. The catalysed reaction is pseudouridine(1915) in 23S rRNA + S-adenosyl-L-methionine = N(3)-methylpseudouridine(1915) in 23S rRNA + S-adenosyl-L-homocysteine + H(+). Specifically methylates the pseudouridine at position 1915 (m3Psi1915) in 23S rRNA. The protein is Ribosomal RNA large subunit methyltransferase H of Streptococcus agalactiae serotype Ia (strain ATCC 27591 / A909 / CDC SS700).